The following is a 353-amino-acid chain: uncharacterized protein (353 aa).

The region spanning 18 to 83 is the HTH luxR-type domain; sequence NIEFPCLLSE…TLWRDVFLRF (66 aa). The H-T-H motif DNA-binding region spans 42–61; that stretch reads VNEISKRRNRSIKTVSCQKM. The EAL domain maps to 98-350; sequence NSSVLPVVSS…AFVRKLLASL (253 aa).

This is an uncharacterized protein from Escherichia coli (strain K12).